A 264-amino-acid chain; its full sequence is Thymidylate synthase (264 aa).

Residue Arg-21 coordinates dUMP. His-51 is a binding site for (6R)-5,10-methylene-5,6,7,8-tetrahydrofolate. 126 to 127 is a dUMP binding site; the sequence is RR. Catalysis depends on Cys-146, which acts as the Nucleophile. DUMP is bound by residues 166–169, Asn-177, and 207–209; these read RSAD and HIY. A (6R)-5,10-methylene-5,6,7,8-tetrahydrofolate-binding site is contributed by Asp-169. A (6R)-5,10-methylene-5,6,7,8-tetrahydrofolate-binding site is contributed by Ala-263.

Belongs to the thymidylate synthase family. Bacterial-type ThyA subfamily. In terms of assembly, homodimer.

It is found in the cytoplasm. It catalyses the reaction dUMP + (6R)-5,10-methylene-5,6,7,8-tetrahydrofolate = 7,8-dihydrofolate + dTMP. It functions in the pathway pyrimidine metabolism; dTTP biosynthesis. In terms of biological role, catalyzes the reductive methylation of 2'-deoxyuridine-5'-monophosphate (dUMP) to 2'-deoxythymidine-5'-monophosphate (dTMP) while utilizing 5,10-methylenetetrahydrofolate (mTHF) as the methyl donor and reductant in the reaction, yielding dihydrofolate (DHF) as a by-product. This enzymatic reaction provides an intracellular de novo source of dTMP, an essential precursor for DNA biosynthesis. This chain is Thymidylate synthase, found in Coxiella burnetii (strain Dugway 5J108-111).